The following is a 408-amino-acid chain: Imidazolonepropionase (408 aa).

His-73 and His-75 together coordinate Fe(3+). Residues His-73 and His-75 each contribute to the Zn(2+) site. Residues Arg-82, Tyr-145, and His-178 each coordinate 4-imidazolone-5-propanoate. N-formimidoyl-L-glutamate is bound at residue Tyr-145. His-243 contacts Fe(3+). His-243 provides a ligand contact to Zn(2+). Gln-246 is a binding site for 4-imidazolone-5-propanoate. Asp-318 contacts Fe(3+). Asp-318 lines the Zn(2+) pocket. Asn-320 and Gly-322 together coordinate N-formimidoyl-L-glutamate. Ser-323 is a 4-imidazolone-5-propanoate binding site.

Belongs to the metallo-dependent hydrolases superfamily. HutI family. The cofactor is Zn(2+). Requires Fe(3+) as cofactor.

The protein resides in the cytoplasm. It carries out the reaction 4-imidazolone-5-propanoate + H2O = N-formimidoyl-L-glutamate. The protein operates within amino-acid degradation; L-histidine degradation into L-glutamate; N-formimidoyl-L-glutamate from L-histidine: step 3/3. Catalyzes the hydrolytic cleavage of the carbon-nitrogen bond in imidazolone-5-propanoate to yield N-formimidoyl-L-glutamate. It is the third step in the universal histidine degradation pathway. The polypeptide is Imidazolonepropionase (Shewanella halifaxensis (strain HAW-EB4)).